The sequence spans 82 residues: Large ribosomal subunit protein eL14 (82 aa).

The protein belongs to the eukaryotic ribosomal protein eL14 family.

This chain is Large ribosomal subunit protein eL14, found in Pyrococcus abyssi (strain GE5 / Orsay).